The primary structure comprises 232 residues: Ubiquinone biosynthesis O-methyltransferase (232 aa).

Positions 36, 55, 76, and 120 each coordinate S-adenosyl-L-methionine.

This sequence belongs to the methyltransferase superfamily. UbiG/COQ3 family.

The enzyme catalyses a 3-demethylubiquinol + S-adenosyl-L-methionine = a ubiquinol + S-adenosyl-L-homocysteine + H(+). It carries out the reaction a 3-(all-trans-polyprenyl)benzene-1,2-diol + S-adenosyl-L-methionine = a 2-methoxy-6-(all-trans-polyprenyl)phenol + S-adenosyl-L-homocysteine + H(+). The protein operates within cofactor biosynthesis; ubiquinone biosynthesis. Functionally, O-methyltransferase that catalyzes the 2 O-methylation steps in the ubiquinone biosynthetic pathway. The chain is Ubiquinone biosynthesis O-methyltransferase from Burkholderia multivorans (strain ATCC 17616 / 249).